Here is a 340-residue protein sequence, read N- to C-terminus: Proline-rich transmembrane protein 2 (340 aa).

The tract at residues 1–261 is disordered; the sequence is MAASSSEISE…AGPGVEGGEG (261 aa). Topologically, residues 1–268 are cytoplasmic; that stretch reads MAASSSEISE…GEGTQKPRDY (268 aa). The span at 9–18 shows a compositional bias: basic and acidic residues; that stretch reads SEMKGVEESP. Ser28 bears the Phosphoserine mark. A Phosphothreonine modification is found at Thr74. Pro residues-rich tracts occupy residues 131-155 and 197-207; these read PPEP…PKPA and APEPHSPPSKK. At Ser238 the chain carries Phosphoserine. At Arg240 the chain carries Omega-N-methylarginine. Ser248 and Ser249 each carry phosphoserine. Positions 269–289 form an intramembrane region, helical; that stretch reads IILAILSCFCPMWPVNIVAFA. Residues 290-317 lie on the Cytoplasmic side of the membrane; the sequence is YAVMSRNSLQQGDVDGAQRLGRVAKLLS. Residues 318-338 form a helical membrane-spanning segment; sequence IVALVGGVLIIIASCVINLGV. Residues 339–340 lie on the Extracellular side of the membrane; that stretch reads YK.

It belongs to the CD225/Dispanin family. In terms of assembly, component of the outer core of AMPAR complex. AMPAR complex consists of an inner core made of 4 pore-forming GluA/GRIA proteins (GRIA1, GRIA2, GRIA3 and GRIA4) and 4 major auxiliary subunits arranged in a twofold symmetry. One of the two pairs of distinct binding sites is occupied either by CNIH2, CNIH3 or CACNG2, CACNG3. The other harbors CACNG2, CACNG3, CACNG4, CACNG8 or GSG1L. This inner core of AMPAR complex is complemented by outer core constituents binding directly to the GluA/GRIA proteins at sites distinct from the interaction sites of the inner core constituents. Outer core constituents include at least PRRT1, PRRT2, CKAMP44/SHISA9, FRRS1L and NRN1. The proteins of the inner and outer core serve as a platform for other, more peripherally associated AMPAR constituents. Alone or in combination, these auxiliary subunits control the gating and pharmacology of the AMPAR complex and profoundly impact their biogenesis and protein processing. Interacts with intersectin 1/ITSN1. Interacts with SNARE complex components, including SNAP25, STX1A, SYT1 and SYT2; this interaction may inhibit SNARE complex formation.

It is found in the cell membrane. The protein localises to the presynaptic cell membrane. Its subcellular location is the synapse. It localises to the cell projection. The protein resides in the axon. It is found in the cytoplasmic vesicle. The protein localises to the secretory vesicle. Its subcellular location is the synaptic vesicle membrane. It localises to the postsynaptic density membrane. The protein resides in the dendritic spine. In terms of biological role, as a component of the outer core of AMPAR complex, may be involved in synaptic transmission in the central nervous system. In hippocampal neurons, in presynaptic terminals, plays an important role in the final steps of neurotransmitter release, possibly by regulating Ca(2+)-sensing. In the cerebellum, may inhibit SNARE complex formation and down-regulate short-term facilitation. The chain is Proline-rich transmembrane protein 2 (PRRT2) from Homo sapiens (Human).